A 344-amino-acid polypeptide reads, in one-letter code: MQTISLIRPDDWHLHVRDGAALATVVPHTARRFGRALIMPNLRPPVTTAAQALEYRARILAAVPPGQHFEPLMSLYLTDNTSPDEIDRAKASGAVVAVKLYPAGATTNSDAGVTAIEKVHAVLERMEKLGMVLCVHGEVTHGDVDVFDREQVFIEQVLAPLVARFPALRVVFEHITTAEAARFVQDAGPNVAATVTAHHLLLNRNAIFAGGIRPHHYCLPVLKRETHRRALVEAATSGNAKFFLGTDSAPHSRAAKETACGCAGCYTAHAAIELYAEAFEQAGALDRLEAFASLNGPAFYGLAPNAERITLAKDAWEVPGEYEYLHDDPLVPLRAGETVAWRVL.

Residues H13 and H15 each coordinate Zn(2+). Substrate-binding positions include 15–17 (HVR) and N41. 3 residues coordinate Zn(2+): K99, H136, and H174. K99 is subject to N6-carboxylysine. A substrate-binding site is contributed by H136. Residue L219 participates in substrate binding. Zn(2+) is bound at residue D247. D247 is an active-site residue. H251 and A263 together coordinate substrate.

The protein belongs to the metallo-dependent hydrolases superfamily. DHOase family. Class II DHOase subfamily. In terms of assembly, homodimer. It depends on Zn(2+) as a cofactor.

It catalyses the reaction (S)-dihydroorotate + H2O = N-carbamoyl-L-aspartate + H(+). It functions in the pathway pyrimidine metabolism; UMP biosynthesis via de novo pathway; (S)-dihydroorotate from bicarbonate: step 3/3. Catalyzes the reversible cyclization of carbamoyl aspartate to dihydroorotate. The polypeptide is Dihydroorotase (Aromatoleum aromaticum (strain DSM 19018 / LMG 30748 / EbN1) (Azoarcus sp. (strain EbN1))).